Reading from the N-terminus, the 292-residue chain is MKQIYLKSRAKINLSLDVRRKREDGYHEVEMIMQQIDLYDNILIRERMDSEIVLSTNCIFIPTTSSNIAYKAAHKLKQRLDITRGIDIFIDKQIPVSAGLAGGSSNAAAVLMGLNHLWSLGLSTKELMEIGVTIGADVPFCLLGGTALAEGIGEVLTPINSDIKNTWIVLVKPAISVSTGDVYGSLDLSKIVDRPPTAQLLEAIKEGNIYDVSSKMCNVLETVTVNKYPIITEIKKKMMEYNALGAMMSGSGPTVFGIFKSYERAKSAYEHLSLFYKQSYMVQTYNGGTEIG.

K11 is an active-site residue. 95–105 (PVSAGLAGGSS) lines the ATP pocket. Residue D137 is part of the active site.

Belongs to the GHMP kinase family. IspE subfamily.

It carries out the reaction 4-CDP-2-C-methyl-D-erythritol + ATP = 4-CDP-2-C-methyl-D-erythritol 2-phosphate + ADP + H(+). Its pathway is isoprenoid biosynthesis; isopentenyl diphosphate biosynthesis via DXP pathway; isopentenyl diphosphate from 1-deoxy-D-xylulose 5-phosphate: step 3/6. Functionally, catalyzes the phosphorylation of the position 2 hydroxy group of 4-diphosphocytidyl-2C-methyl-D-erythritol. The sequence is that of 4-diphosphocytidyl-2-C-methyl-D-erythritol kinase from Alkaliphilus oremlandii (strain OhILAs) (Clostridium oremlandii (strain OhILAs)).